A 419-amino-acid polypeptide reads, in one-letter code: UDP-N-acetylglucosamine 1-carboxyvinyltransferase 2 (419 aa).

Residue 24–25 (KN) participates in phosphoenolpyruvate binding. Arg94 lines the UDP-N-acetyl-alpha-D-glucosamine pocket. The Proton donor role is filled by Cys118. Residue Cys118 is modified to 2-(S-cysteinyl)pyruvic acid O-phosphothioketal. UDP-N-acetyl-alpha-D-glucosamine contacts are provided by residues 123–127 (RPIDQ), Asp307, and Ile329.

It belongs to the EPSP synthase family. MurA subfamily.

The protein localises to the cytoplasm. It catalyses the reaction phosphoenolpyruvate + UDP-N-acetyl-alpha-D-glucosamine = UDP-N-acetyl-3-O-(1-carboxyvinyl)-alpha-D-glucosamine + phosphate. Its pathway is cell wall biogenesis; peptidoglycan biosynthesis. Functionally, cell wall formation. Adds enolpyruvyl to UDP-N-acetylglucosamine. The protein is UDP-N-acetylglucosamine 1-carboxyvinyltransferase 2 of Staphylococcus aureus (strain MRSA252).